The primary structure comprises 77 residues: Sec-independent protein translocase protein TatA (77 aa).

The chain crosses the membrane as a helical span at residues 1 to 21; sequence MGSFSIWHWLIVLVIVMLVFG. The tract at residues 40 to 77 is disordered; the sequence is KDGMKEGNTDEPATPTPAKELRDSTTIDVEAKEKSRQQ. Residues 58–77 show a composition bias toward basic and acidic residues; sequence KELRDSTTIDVEAKEKSRQQ.

The protein belongs to the TatA/E family. In terms of assembly, the Tat system comprises two distinct complexes: a TatABC complex, containing multiple copies of TatA, TatB and TatC subunits, and a separate TatA complex, containing only TatA subunits. Substrates initially bind to the TatABC complex, which probably triggers association of the separate TatA complex to form the active translocon.

Its subcellular location is the cell inner membrane. Functionally, part of the twin-arginine translocation (Tat) system that transports large folded proteins containing a characteristic twin-arginine motif in their signal peptide across membranes. TatA could form the protein-conducting channel of the Tat system. The protein is Sec-independent protein translocase protein TatA of Cupriavidus metallidurans (strain ATCC 43123 / DSM 2839 / NBRC 102507 / CH34) (Ralstonia metallidurans).